A 4367-amino-acid chain; its full sequence is Guanylate cyclase (4367 aa).

A compositionally biased stretch (polar residues) spans 1–10; it reads MKKTRTTAAE. The disordered stretch occupies residues 1 to 70; that stretch reads MKKTRTTAAE…MSFLQGKHQQ (70 aa). Residues 1–150 lie on the Cytoplasmic side of the membrane; sequence MKKTRTTAAE…FKNLWEQFHR (150 aa). Positions 19 to 33 are enriched in basic and acidic residues; sequence PHDEHRGRGREHGGA. Residues 54-63 show a composition bias toward polar residues; it reads HQATQKQMSF. Residues 151 to 171 traverse the membrane as a helical segment; it reads VINWWFLVMAIIQAIPQLHYN. Residues 172–174 lie on the Extracellular side of the membrane; it reads PNH. A helical transmembrane segment spans residues 175–195; the sequence is AWSTALPFAIVLVFGMLKDAF. The Cytoplasmic portion of the chain corresponds to 196–373; it reads TDLGRRERDR…GFKRPHIEKD (178 aa). The chain crosses the membrane as a helical span at residues 374 to 394; sequence INTYLFISFFIVFLTILISVM. Residues 395-452 are Extracellular-facing; that stretch reads SKWSVQERDSGDTGVTDAGASSGSGSSSGETSQTYGSSVEFMLGSRDLLQNPWMSILR. Residues 402–426 form a disordered region; it reads RDSGDTGVTDAGASSGSGSSSGETS. Low complexity predominate over residues 407-426; the sequence is TGVTDAGASSGSGSSSGETS. Residues 453–473 form a helical membrane-spanning segment; it reads FLAVYAPVLPLSLPLILDVVY. Over 474–2258 the chain is Cytoplasmic; the sequence is LLQSVLIEGD…VHGRLSLMRV (1785 aa). Disordered regions lie at residues 486 to 535, 550 to 699, 831 to 918, 932 to 966, 980 to 1047, 1079 to 1164, 1344 to 1593, 1607 to 1652, 1773 to 1861, and 1881 to 1946; these read IRGG…QQPL, SEKF…ISGR, ETSA…ASSL, RLEE…PQLA, VGIQ…GELS, GMSF…MPAV, PSGT…SLKS, FRRG…TGTG, GGRG…GLRS, and DKQH…PQHL. Positions 523 to 535 are enriched in polar residues; it reads AHSSQNASLQQPL. 2 stretches are compositionally biased toward basic and acidic residues: residues 605-628 and 670-679; these read ETLR…REQL and RRSDDRDRKS. Residues 850–863 show a composition bias toward low complexity; it reads SAASSRSQSAPASA. The segment covering 880 to 892 has biased composition (polar residues); that stretch reads QTLTNQQTGQQSP. Residues 906–917 are compositionally biased toward low complexity; that stretch reads ASPGAADSPASS. The span at 932-948 shows a compositional bias: basic and acidic residues; the sequence is RLEETGSQKEEDSRSDR. Over residues 983–996 the composition is skewed to low complexity; it reads QSQHSSQSLLSSRQ. The segment covering 1025 to 1047 has biased composition (basic and acidic residues); it reads DRMYSRDYHRESRSSSPRDGELS. 2 stretches are compositionally biased toward polar residues: residues 1084 to 1094 and 1117 to 1130; these read SRPSSQFTFSS and RSLT…TASP. Positions 1344-1357 are enriched in low complexity; it reads PSGTSASSGAPSGP. Composition is skewed to gly residues over residues 1370–1381 and 1389–1400; these read QGQGHGSLGAPG and CLGGAGGSGARG. The span at 1443–1454 shows a compositional bias: pro residues; that stretch reads VPSPRPLSPAGP. Over residues 1527–1542 the composition is skewed to basic and acidic residues; that stretch reads SFKEKHEEFAFSKDED. Positions 1543–1567 are enriched in acidic residues; the sequence is TATVDQDDTQSATDEEHDVEGEEEE. Residues 1583-1593 are compositionally biased toward low complexity; that stretch reads SASASLMSLKS. 3 stretches are compositionally biased toward polar residues: residues 1628–1652, 1779–1791, and 1843–1852; these read GRSS…TGTG, VSLS…SSAK, and VNPSGQTYSQ. Over residues 1881-1922 the composition is skewed to basic and acidic residues; that stretch reads DKQHQRGHGPEGDEGSHELEGHDAHTGDSHGGHHRDQAEPRA. Residues 1933–1942 are compositionally biased toward polar residues; the sequence is RLPQKTQNRL. A helical transmembrane segment spans residues 2259–2279; it reads STVILWSFFKSLCIGLPTFLF. Over 2280–2289 the chain is Extracellular; it reads QPQAFWSAVE. Residues 2290–2310 form a helical membrane-spanning segment; it reads VYDPLLLMIVDFFWTTLPGII. Residues 2311–2343 lie on the Cytoplasmic side of the membrane; it reads HGYSDQDLPTHLLPSVPVLYTPGRRRLYFNGFR. The helical transmembrane segment at 2344-2364 threads the bilayer; the sequence is FILWTVEGIIYSFLIFYLLQA. The Extracellular segment spans residues 2365 to 2376; it reads TWMDGNTFHDGQ. Residues 2377-2397 traverse the membrane as a helical segment; it reads VLGFHSYGILLLFGSLLQSNV. The Cytoplasmic segment spans residues 2398–2408; it reads RIILETSLWTP. Residues 2409–2429 form a helical membrane-spanning segment; sequence TFLFTTIVLCTIMFFPTVLLY. The Extracellular segment spans residues 2430-2444; it reads SVTGWPRRYMELAGR. Residues 2445–2465 form a helical membrane-spanning segment; it reads VVFAWPMLYFLIPLWVSIGIL. At 2466-2724 the chain is on the cytoplasmic side; the sequence is VQLLLQVFTS…LKRLVPWYRV (259 aa). A helical transmembrane segment spans residues 2725 to 2745; it reads IFMLIALYQLLSFLTEYFIDI. Residues 2746–2762 lie on the Extracellular side of the membrane; it reads HWNPGETEMEPWMCVPT. Residues 2763-2783 traverse the membrane as a helical segment; the sequence is LVVEIGFAAVVVCTFYDFIFL. Over 2784–2785 the chain is Cytoplasmic; the sequence is DH. The chain crosses the membrane as a helical span at residues 2786 to 2806; the sequence is FSLILNSIVFLMVSSSIVFYT. Residues 2807-2823 are Extracellular-facing; that stretch reads ASHVDGTLTSVLFPVFT. A helical transmembrane segment spans residues 2824–2844; that stretch reads FVILRISFLQAVVWNILFLIV. Residues 2845–2858 are Cytoplasmic-facing; sequence TVARFMLDKKYLPP. The chain crosses the membrane as a helical span at residues 2859-2879; that stretch reads LNFVHYIPLFIGIDVFVAFVG. Topologically, residues 2880 to 2903 are extracellular; it reads YRLEYNQRKSFLLDYSVDASRRKQ. A helical transmembrane segment spans residues 2904 to 2924; that stretch reads REILNTMLPSFVVDQMINSEL. Over 2925-3693 the chain is Cytoplasmic; that stretch reads NEEGIPTSLK…RTHFYNNKSN (769 aa). Residues 2942 to 3150 enclose the Guanylate cyclase 1 domain; it reads SVIFCDVYEF…DTVNTASRMK (209 aa). Disordered regions lie at residues 3214 to 3245, 3359 to 3402, 3456 to 3475, 3485 to 3508, 3523 to 3596, and 3620 to 3653; these read DVIS…ASSG, GQTE…SRFD, SGDE…EVPL, QARE…HTPT, GCAA…ETEK, and FRRR…VDDE. Residues 3383-3402 show a composition bias toward basic and acidic residues; it reads RADRRPAGRREDSRGDSRFD. 3 stretches are compositionally biased toward basic and acidic residues: residues 3485 to 3499, 3529 to 3541, and 3549 to 3569; these read QARE…KRSG, EEEK…RESE, and TESR…DARE. The span at 3626 to 3637 shows a compositional bias: low complexity; it reads AAPSEAASPSSA. A helical membrane pass occupies residues 3694 to 3714; it reads INTIEQALIIFLVTFCVQTLT. Residues 3715 to 3736 lie on the Extracellular side of the membrane; the sequence is RLALPRFYVVCSHHTINLHVCT. The chain crosses the membrane as a helical span at residues 3737–3757; it reads GLYWAVRATYTLAAFVLWMLF. Topologically, residues 3758-3772 are cytoplasmic; that stretch reads HYRNRKEVATCLELR. The helical transmembrane segment at 3773 to 3793 threads the bilayer; the sequence is WMVFLLNLLFISASCVFALSN. Topologically, residues 3794 to 3895 are extracellular; the sequence is SWGVCGQQQE…GSDLVTANGR (102 aa). Residues 3896–3916 form a helical membrane-spanning segment; sequence AYTYWLLSDTIELFFYIVILH. At 3917–3921 the chain is on the cytoplasmic side; sequence HNTGL. The helical transmembrane segment at 3922 to 3942 threads the bilayer; sequence LFQNCILVDVLLMTMSLTFII. Topologically, residues 3943–3950 are extracellular; sequence TTARETAS. Residues 3951–3971 traverse the membrane as a helical segment; the sequence is TVSTIATFPCYVFFNLVSAYC. At 3972–4367 the chain is on the cytoplasmic side; it reads KEYIDRLTFY…GSTPGSALGS (396 aa). Residues 4024–4159 enclose the Guanylate cyclase 2 domain; that stretch reads TFLFADICGF…MDVLTGNMME (136 aa). Mg(2+) contacts are provided by Asp-4029, Ile-4030, and Asp-4073. Positions 4292–4367 are disordered; that stretch reads ASHGDSGPSD…GSTPGSALGS (76 aa). The span at 4333 to 4344 shows a compositional bias: basic and acidic residues; the sequence is DGLKQLRKEIER. A compositionally biased stretch (polar residues) spans 4356 to 4367; it reads DIGSTPGSALGS.

In the N-terminal section; belongs to the cation transport ATPase (P-type) (TC 3.A.3) family. Type IV subfamily. The protein in the C-terminal section; belongs to the adenylyl cyclase class-4/guanylyl cyclase family. As to quaternary structure, interacts with chaperone CDC50.1; the interaction regulates guanylate cyclase GC trafficking and sensing environmental changes. Interacts with UGO; the interaction regulates guanylate cyclase GC trafficking and catalytic activity. Mg(2+) is required as a cofactor. Requires Mn(2+) as cofactor.

The protein localises to the cell membrane. It catalyses the reaction GTP = 3',5'-cyclic GMP + diphosphate. Its function is as follows. Catalyzes the synthesis of the second messenger cGMP from GTP. During the tachyzoite lytic growth cycle in host cells, detects and transduces environmental changes in potassium, phosphatidic acid and pH levels. By producing cGMP in response to these environmental changes, activates PKG and thereby regulates PKG-dependent microneme secretion which is essential for tachyzoite motility, host cell attachment invasion of and egress from host cells. May play a role in the fission of connected tachyzoites at their basal pole during egress. Does not display flippase activity towards phosphatidylserine, phosphatidic acid or phosphatidylcholine. This chain is Guanylate cyclase, found in Toxoplasma gondii (strain ATCC 50853 / GT1).